We begin with the raw amino-acid sequence, 368 residues long: Ceramide synthase hyl-1 (368 aa).

A run of 7 helical transmembrane segments spans residues 27–47 (FVDLLVPIYLAIPLVIIRILW), 92–112 (ILECFWRFSYYTFAFLYGLYV), 138–158 (IWWYYMIETGFYYSLLIGSTF), 165–185 (FWQLMVHHVITIFLLSSSWTI), 191–211 (GTLILLSHDVSDVFLEGGKLV), 225–245 (FVLFFSSWVATRLIYYPFIVI), and 275–295 (LIVFALILLFFLHIFWTFIIL). Residues 90 to 303 (KKILECFWRF…ILRIAYRTST (214 aa)) form the TLC domain. Residues 306 to 368 (QAKDVRSDSD…ARHRRAPRKE (63 aa)) form a disordered region. Residues 343 to 353 (TDDDDDEGEEE) show a composition bias toward acidic residues. Over residues 357–368 (RKARHRRAPRKE) the composition is skewed to basic residues.

This sequence belongs to the sphingosine N-acyltransferase family.

It is found in the membrane. The catalysed reaction is a very long-chain fatty acyl-CoA + a sphingoid base = an N-(very-long-chain fatty acyl)-sphingoid base + CoA + H(+). It carries out the reaction 15-methylhexadecasphinganine + a fatty acyl-CoA = an N-acyl-15-methylhexadecasphinganine + CoA + H(+). It catalyses the reaction a fatty acyl-CoA + sphinganine = an N-acylsphinganine + CoA + H(+). The enzyme catalyses sphinganine + tetradecanoyl-CoA = N-(tetradecanoyl)-sphinganine + CoA + H(+). The catalysed reaction is hexacosanoyl-CoA + sphinganine = N-hexacosanoylsphinganine + CoA + H(+). It functions in the pathway lipid metabolism; sphingolipid metabolism. Its function is as follows. Catalyzes the acylation of sphingoid bases to form ceramides, which are key players in cell signaling events such as extending lifespan and enhancing stress resistance. C.elegans contain specific sphingoid bases, which are unique or different in structure compared to the sphingoid bases found in other animals. Two examples of these distinctive compounds are: 15-methylhexadecasphinganine and 15-methylhexadecasphing-4-enine. Exhibits substrate preference for fatty acyl-coA chains containing carbon chain length (C16-C18) and very long chains (24 carbons and more). This Caenorhabditis elegans protein is Ceramide synthase hyl-1 (hyl-1).